The following is a 321-amino-acid chain: tRNA U34 carboxymethyltransferase (321 aa).

Residues Lys90, Trp104, Lys109, Gly129, 151–153 (DPT), 180–181 (IE), Met195, Tyr199, and Arg314 contribute to the carboxy-S-adenosyl-L-methionine site.

This sequence belongs to the class I-like SAM-binding methyltransferase superfamily. CmoB family. Homotetramer.

The enzyme catalyses carboxy-S-adenosyl-L-methionine + 5-hydroxyuridine(34) in tRNA = 5-carboxymethoxyuridine(34) in tRNA + S-adenosyl-L-homocysteine + H(+). Its function is as follows. Catalyzes carboxymethyl transfer from carboxy-S-adenosyl-L-methionine (Cx-SAM) to 5-hydroxyuridine (ho5U) to form 5-carboxymethoxyuridine (cmo5U) at position 34 in tRNAs. In Haemophilus influenzae (strain ATCC 51907 / DSM 11121 / KW20 / Rd), this protein is tRNA U34 carboxymethyltransferase.